The primary structure comprises 393 residues: Putative 8-amino-7-oxononanoate synthase (393 aa).

Position 23 (R23) interacts with substrate. 110–111 lines the pyridoxal 5'-phosphate pocket; sequence GY. Residue H135 participates in substrate binding. Residues S183, 208-211, and 239-242 each bind pyridoxal 5'-phosphate; these read DEAH and TLSK. N6-(pyridoxal phosphate)lysine is present on K242. T362 provides a ligand contact to substrate.

It belongs to the class-II pyridoxal-phosphate-dependent aminotransferase family. BioF subfamily. As to quaternary structure, homodimer. It depends on pyridoxal 5'-phosphate as a cofactor.

The enzyme catalyses 6-carboxyhexanoyl-[ACP] + L-alanine + H(+) = (8S)-8-amino-7-oxononanoate + holo-[ACP] + CO2. Its pathway is cofactor biosynthesis; biotin biosynthesis. Catalyzes the decarboxylative condensation of pimeloyl-[acyl-carrier protein] and L-alanine to produce 8-amino-7-oxononanoate (AON), [acyl-carrier protein], and carbon dioxide. The sequence is that of Putative 8-amino-7-oxononanoate synthase (bioF) from Trichodesmium erythraeum (strain IMS101).